Reading from the N-terminus, the 151-residue chain is MSAIPPTSNGWLRKMQLGQQYMKTWPIEKQLAPMFPENRIIKATRFGIRFMPPLAIFTLTWQIALGGQLGPAVATALFACSLPMQGLWWLGKRASTPLPAALLKWFHEIRDKFAAAGITMAPVQQTPTYQSLAELLKRAFKQLDRSFLDDI.

A run of 2 helical transmembrane segments spans residues Phe46 to Leu65 and Leu69 to Gly91.

This sequence belongs to the UPF0208 family.

The protein localises to the cell inner membrane. This Photorhabdus laumondii subsp. laumondii (strain DSM 15139 / CIP 105565 / TT01) (Photorhabdus luminescens subsp. laumondii) protein is UPF0208 membrane protein plu3094.